Consider the following 149-residue polypeptide: Putative eggshell protein (149 aa).

Repeat copies occupy residues 1–5 (YGYDK), 6–10 (YGYDK), 11–15 (YGYDK), 16–20 (YGYDK), 21–25 (YGYDK), and 26–30 (YGYEK). Residues 1–64 (YGYDKYGYDK…YGYDKYGDDK (64 aa)) are 13 X 5 AA approximate tandem repeats of Y-G-Y-[DE]-K. One copy of the 7; truncated repeat lies at 31-34 (GYDK). 3 repeat units span residues 35–39 (YGYDK), 40–44 (YGYEK), and 45–49 (YGYDK). An 11; approximate repeat occupies 50–54 (YGNEK). Repeat unit 12 spans residues 55–59 (YGYDK). A 13; approximate repeat occupies 60–64 (YGDDK). The segment covering 105–124 (YRKDHDKHDHDEHDHHDDHH) has biased composition (basic and acidic residues). The tract at residues 105–149 (YRKDHDKHDHDEHDHHDDHHDHRHHHHEHDHHHHHEHDHKNGKGY) is disordered. Residues 125–141 (DHRHHHHEHDHHHHHEH) show a composition bias toward basic residues.

This is Putative eggshell protein from Schistosoma mansoni (Blood fluke).